A 709-amino-acid chain; its full sequence is Copper amine oxidase vicK1 (709 aa).

The N-terminal stretch at 1–20 (MKLFLLFTLTLVNIFSVSLQ) is a signal peptide. Asp365 (proton acceptor) is an active-site residue. An intrachain disulfide couples Cys383 to Cys408. Tyr448 serves as the catalytic Schiff-base intermediate with substrate; via topaquinone. Tyr448 is modified (2',4',5'-topaquinone). Cu cation contacts are provided by His496 and His498. Ca(2+) is bound by residues Asp505, Leu506, Asp507, Glu548, Phe641, Glu645, Asp651, and Leu652. Residue His662 participates in Cu cation binding.

This sequence belongs to the copper/topaquinone oxidase family. In terms of assembly, homodimer; disulfide-linked. Requires Cu cation as cofactor. Ca(2+) is required as a cofactor. It depends on L-topaquinone as a cofactor. Topaquinone (TPQ) is generated by copper-dependent autoxidation of a specific tyrosyl residue.

It functions in the pathway mycotoxin biosynthesis. In terms of biological role, copper amine oxidase, part of the gene cluster that mediates the biosynthesis of the secondary metabolite victorin, the molecular basis for Victoria blight of oats. Within the pathway, vicK1 catalyzes the oxidative deamination of the N-terminal glycyl moiety of the hexapeptides in order to produce the active glyoxylate form victorins. The pathway starts with the processing of the precursor vicA1 by several endopeptidases including kexin proteases as well as the cluster-specific S28 family peptidases vicPa and vicPb to produce 7 identical copies of the hexapeptide Gly-Leu-Lys-Leu-Ala-Phe. After being excised from the precursor peptide, the core peptides are cyclized and modified post-translationally by enzymes encoded within the gene cluster. The ustYa family oxidase vicYb is required for the formation of the macrocycle in victorin and the copper amine oxidases (CAOs) vicK1 and vicK2 are responsible for converting victorin to the active form by oxidizing the N-terminal glycyl residue in the peptides to glyoxylate. Relaxed substrate specificity of enzymes in the victorin biosynthetic pathway results in a metabolic grid that produces a set of analogs including victorinines B, C, E or HV-toxin M. In Bipolaris victoriae (strain FI3) (Victoria blight of oats agent), this protein is Copper amine oxidase vicK1.